The chain runs to 177 residues: ATP synthase subunit delta (177 aa).

It belongs to the ATPase delta chain family. As to quaternary structure, F-type ATPases have 2 components, F(1) - the catalytic core - and F(0) - the membrane proton channel. F(1) has five subunits: alpha(3), beta(3), gamma(1), delta(1), epsilon(1). CF(0) has four main subunits: a(1), b(1), b'(1) and c(10-14). The alpha and beta chains form an alternating ring which encloses part of the gamma chain. F(1) is attached to F(0) by a central stalk formed by the gamma and epsilon chains, while a peripheral stalk is formed by the delta, b and b' chains.

The protein localises to the cell inner membrane. Functionally, f(1)F(0) ATP synthase produces ATP from ADP in the presence of a proton or sodium gradient. F-type ATPases consist of two structural domains, F(1) containing the extramembraneous catalytic core and F(0) containing the membrane proton channel, linked together by a central stalk and a peripheral stalk. During catalysis, ATP synthesis in the catalytic domain of F(1) is coupled via a rotary mechanism of the central stalk subunits to proton translocation. Its function is as follows. This protein is part of the stalk that links CF(0) to CF(1). It either transmits conformational changes from CF(0) to CF(1) or is implicated in proton conduction. This is ATP synthase subunit delta from Methylibium petroleiphilum (strain ATCC BAA-1232 / LMG 22953 / PM1).